The primary structure comprises 101 residues: ATP-dependent Clp protease adapter protein ClpS 1 (101 aa).

It belongs to the ClpS family. Binds to the N-terminal domain of the chaperone ClpA.

Its function is as follows. Involved in the modulation of the specificity of the ClpAP-mediated ATP-dependent protein degradation. The polypeptide is ATP-dependent Clp protease adapter protein ClpS 1 (Bradyrhizobium diazoefficiens (strain JCM 10833 / BCRC 13528 / IAM 13628 / NBRC 14792 / USDA 110)).